The following is a 215-amino-acid chain: Ribonuclease T (215 aa).

An Exonuclease domain is found at 20–194; that stretch reads VVIDVETAGF…YDTLQTAKLF (175 aa). D23, E25, H181, and D186 together coordinate Mg(2+). The active-site Proton donor/acceptor is the H181.

The protein belongs to the RNase T family. Homodimer. Mg(2+) serves as cofactor.

Trims short 3' overhangs of a variety of RNA species, leaving a one or two nucleotide 3' overhang. Responsible for the end-turnover of tRNA: specifically removes the terminal AMP residue from uncharged tRNA (tRNA-C-C-A). Also appears to be involved in tRNA biosynthesis. This Yersinia pestis protein is Ribonuclease T.